Reading from the N-terminus, the 190-residue chain is Elongation factor P (190 aa).

The residue at position 34 (Lys-34) is an N6-(3,6-diaminohexanoyl)-5-hydroxylysine.

The protein belongs to the elongation factor P family. In terms of processing, may be beta-lysylated on the epsilon-amino group of Lys-34 by the combined action of EpmA and EpmB, and then hydroxylated on the C5 position of the same residue by EpmC (if this protein is present). Lysylation is critical for the stimulatory effect of EF-P on peptide-bond formation. The lysylation moiety may extend toward the peptidyltransferase center and stabilize the terminal 3-CCA end of the tRNA. Hydroxylation of the C5 position on Lys-34 may allow additional potential stabilizing hydrogen-bond interactions with the P-tRNA.

The protein resides in the cytoplasm. The protein operates within protein biosynthesis; polypeptide chain elongation. Involved in peptide bond synthesis. Alleviates ribosome stalling that occurs when 3 or more consecutive Pro residues or the sequence PPG is present in a protein, possibly by augmenting the peptidyl transferase activity of the ribosome. Modification of Lys-34 is required for alleviation. In Hahella chejuensis (strain KCTC 2396), this protein is Elongation factor P.